We begin with the raw amino-acid sequence, 579 residues long: MFSLRSLVDYLRVQRELIDIYTPVDPYLEIAEIHRRVVENEGPALLFHHVKGSPFPVLTNLFGTQKRVDLLFPDLSSGIFDQIAILLSSPPSFSSLWQHRSLLKRGLSSLGLRKQRFRPSPFLHQDAPNLLQLPMLTSWPEDGGPFLTLPLVYTQSPENGIPNLGMYRMQRFDEQTLGLHFQIQKGGGAHFFEAEQKQQNLPVTIFLSGNPFLILSAIAPLPENVPELLFCSFLQNKKLSFVKKAPLSNHPLLCDAEFILTGEALAGKRRPEGPFGDHFGYYSLTHDFPIFNCQHLYHKKDAIYPATIVGKPFQEDFFLGNKLQEILSPLFPLIMPGVQDLKSYGEAGFHAVAAAVVKERYWKEALRSALRILGEGQLSLTKFLWITDQSVDLNNFPSLLECVLKRMRFDQDLIIISDTANDTLDYTGPALNKGSRGIFLGVGTPIRSLPRHYQGPSLPGVSRIGVFCXGCLVLETSIQQINIPLLLKESHLEQWPLIVLVEDLSKTLSDTKEFLWRTFTRSSPATDLHIPVSHVTNHKISYRPPMILNALMKPSYPKEVEADEETKKHVSSRWDKYFS.

Belongs to the UbiD family.

This is an uncharacterized protein from Chlamydia muridarum (strain MoPn / Nigg).